Here is a 381-residue protein sequence, read N- to C-terminus: Spermidine/putrescine import ATP-binding protein PotA (381 aa).

Residues 22-252 (VELRNVFKFF…PKTSFVADFI (231 aa)) enclose the ABC transporter domain. 54 to 61 (GPSGCGKT) contacts ATP.

The protein belongs to the ABC transporter superfamily. Spermidine/putrescine importer (TC 3.A.1.11.1) family. As to quaternary structure, the complex is composed of two ATP-binding proteins (PotA), two transmembrane proteins (PotB and PotC) and a solute-binding protein (PotD).

It localises to the cell inner membrane. It catalyses the reaction ATP + H2O + polyamine-[polyamine-binding protein]Side 1 = ADP + phosphate + polyamineSide 2 + [polyamine-binding protein]Side 1.. Its function is as follows. Part of the ABC transporter complex PotABCD involved in spermidine/putrescine import. Responsible for energy coupling to the transport system. The protein is Spermidine/putrescine import ATP-binding protein PotA of Nostoc sp. (strain PCC 7120 / SAG 25.82 / UTEX 2576).